Consider the following 363-residue polypeptide: Probable dual-specificity RNA methyltransferase RlmN (363 aa).

Residue glutamate 99 is the Proton acceptor of the active site. In terms of domain architecture, Radical SAM core spans 105-341 (SENRMTACVS…VTVRKSHGAS (237 aa)). Cysteines 112 and 346 form a disulfide. [4Fe-4S] cluster contacts are provided by cysteine 119, cysteine 123, and cysteine 126. S-adenosyl-L-methionine contacts are provided by residues 171–172 (GE), serine 204, 227–229 (SLH), and asparagine 303. Residue cysteine 346 is the S-methylcysteine intermediate of the active site.

The protein belongs to the radical SAM superfamily. RlmN family. Requires [4Fe-4S] cluster as cofactor.

It localises to the cytoplasm. It carries out the reaction adenosine(2503) in 23S rRNA + 2 reduced [2Fe-2S]-[ferredoxin] + 2 S-adenosyl-L-methionine = 2-methyladenosine(2503) in 23S rRNA + 5'-deoxyadenosine + L-methionine + 2 oxidized [2Fe-2S]-[ferredoxin] + S-adenosyl-L-homocysteine. It catalyses the reaction adenosine(37) in tRNA + 2 reduced [2Fe-2S]-[ferredoxin] + 2 S-adenosyl-L-methionine = 2-methyladenosine(37) in tRNA + 5'-deoxyadenosine + L-methionine + 2 oxidized [2Fe-2S]-[ferredoxin] + S-adenosyl-L-homocysteine. Specifically methylates position 2 of adenine 2503 in 23S rRNA and position 2 of adenine 37 in tRNAs. The polypeptide is Probable dual-specificity RNA methyltransferase RlmN (Chlorobium phaeobacteroides (strain DSM 266 / SMG 266 / 2430)).